A 257-amino-acid polypeptide reads, in one-letter code: Leucine-rich repeat-containing protein 3 (257 aa).

The first 32 residues, 1–32 (MGPRGRQSPSATLAPSQGSCFFILFCLRLGAS), serve as a signal peptide directing secretion. Positions 33-64 (CPQACQCPDHAGAVAVHCSSRGLQEIPRDIPA) constitute an LRRNT domain. 3 LRR repeats span residues 65 to 86 (DTVLLKLDANRISRVPNGAFQH), 89 to 110 (QLRELDLSHNAIEAIGPAAFSG), and 114 to 135 (GLRLLDLSHNRIRRIPKDALGK). The LRRCT domain maps to 145–198 (NPLHCECALQEALWELKLDPDSVDEIACHTSAQEQFVGKPLIQVLDSGASFCST). Residues 205-225 (VAMLVTMFGWFTMVIAYVVYY) traverse the membrane as a helical segment.

This sequence belongs to the LRRC3 family.

The protein localises to the membrane. The sequence is that of Leucine-rich repeat-containing protein 3 (Lrrc3) from Mus musculus (Mouse).